Here is a 380-residue protein sequence, read N- to C-terminus: Cytochrome b (380 aa).

4 helical membrane passes run 34–54 (FGSLLGICLITQILTGLLLAA), 78–99 (WLIRNLHANGASFFFICIYLHI), 114–134 (WNTGVTLLLTLMATAFVGYVL), and 179–199 (FFALHFLLPFMIAGLTLIHLT). Positions 84 and 98 each coordinate heme b. Heme b is bound by residues histidine 183 and histidine 197. Histidine 202 contributes to the a ubiquinone binding site. The next 4 membrane-spanning stretches (helical) occupy residues 227 to 247 (LKDILGFAIMLLLLTTLALFS), 289 to 309 (LGGVLALAASVLILFLTPFLH), 321 to 341 (LSQLLFWLLVANLLILTWVGS), and 348 to 368 (FIIIGQMASITYFIIILVLFP).

Belongs to the cytochrome b family. As to quaternary structure, the cytochrome bc1 complex contains 11 subunits: 3 respiratory subunits (MT-CYB, CYC1 and UQCRFS1), 2 core proteins (UQCRC1 and UQCRC2) and 6 low-molecular weight proteins (UQCRH/QCR6, UQCRB/QCR7, UQCRQ/QCR8, UQCR10/QCR9, UQCR11/QCR10 and a cleavage product of UQCRFS1). This cytochrome bc1 complex then forms a dimer. Heme b serves as cofactor.

It is found in the mitochondrion inner membrane. Component of the ubiquinol-cytochrome c reductase complex (complex III or cytochrome b-c1 complex) that is part of the mitochondrial respiratory chain. The b-c1 complex mediates electron transfer from ubiquinol to cytochrome c. Contributes to the generation of a proton gradient across the mitochondrial membrane that is then used for ATP synthesis. This is Cytochrome b (MT-CYB) from Pharomachrus antisianus (Crested quetzal).